An 85-amino-acid chain; its full sequence is U4-theraphotoxin-Hhn1e (85 aa).

Residues methionine 1–alanine 22 form the signal peptide. Positions glutamate 23–arginine 48 are excised as a propeptide. Disulfide bonds link cysteine 52-cysteine 66, cysteine 56-cysteine 77, and cysteine 71-cysteine 82.

The protein belongs to the neurotoxin 12 (Hwtx-2) family. 02 (Hwtx-2) subfamily. As to expression, expressed by the venom gland.

Its subcellular location is the secreted. Functionally, postsynaptic neurotoxin. This chain is U4-theraphotoxin-Hhn1e, found in Cyriopagopus hainanus (Chinese bird spider).